The chain runs to 144 residues: Large ribosomal subunit protein uL15 (144 aa).

Residues 1-57 form a disordered region; it reads MKLNDLSPAPGSRREKHRPGRGIGSGLGKTGGRGHKGQTSRSGGSIAPGFEGGQQPL. Over residues 21 to 31 the composition is skewed to gly residues; it reads RGIGSGLGKTG.

The protein belongs to the universal ribosomal protein uL15 family. As to quaternary structure, part of the 50S ribosomal subunit.

Functionally, binds to the 23S rRNA. The chain is Large ribosomal subunit protein uL15 from Pseudomonas entomophila (strain L48).